Consider the following 374-residue polypeptide: Putative glutamate--cysteine ligase 2 (374 aa).

Belongs to the glutamate--cysteine ligase type 2 family. YbdK subfamily.

It carries out the reaction L-cysteine + L-glutamate + ATP = gamma-L-glutamyl-L-cysteine + ADP + phosphate + H(+). Functionally, ATP-dependent carboxylate-amine ligase which exhibits weak glutamate--cysteine ligase activity. The protein is Putative glutamate--cysteine ligase 2 of Acidovorax sp. (strain JS42).